The following is a 306-amino-acid chain: Agmatinase (306 aa).

Mn(2+) is bound by residues H126, D149, H151, D153, D230, and D232.

Belongs to the arginase family. Agmatinase subfamily. Mn(2+) is required as a cofactor.

It carries out the reaction agmatine + H2O = urea + putrescine. Its pathway is amine and polyamine biosynthesis; putrescine biosynthesis via agmatine pathway; putrescine from agmatine: step 1/1. Its function is as follows. Catalyzes the formation of putrescine from agmatine. The protein is Agmatinase of Escherichia coli (strain SE11).